Reading from the N-terminus, the 473-residue chain is TOX high mobility group box family member 2 (473 aa).

4 disordered regions span residues 1 to 42 (MSDG…SLLH), 139 to 211 (GLRS…VSAY), 277 to 302 (SKSP…PPKQ), and 340 to 473 (LLPG…PSAR). Residues 8 to 20 (LLSTSQTYNSQGE) are compositionally biased toward polar residues. The segment at 25 to 63 (YEIPPITPPNLPEPSLLHLGDHEAGYHSLCHGLAPNGLL) is required for transcriptional activation. A compositionally biased stretch (low complexity) spans 153–164 (GSKSATPSPSSS). Over residues 171 to 188 (DAHFKISGEKRPSTDPGK) the composition is skewed to basic and acidic residues. A Nuclear localization signal motif is present at residues 172–201 (AHFKISGEKRPSTDPGKKAKNPKKKKKKDP). Basic residues predominate over residues 189–199 (KAKNPKKKKKK). Positions 204–272 (PQKPVSAYAL…EYLKALAAYR (69 aa)) form a DNA-binding region, HMG box. 2 stretches are compositionally biased toward low complexity: residues 373–382 (LLSPPLSMSP) and 415–440 (SDFP…WDGS). Over residues 463 to 473 (SPKNLQEPSAR) the composition is skewed to polar residues.

As to expression, highly expressed in ovary, where it is restricted to undifferentiated granulosa cells. Expressed in hypothalamus, pituitary gland, testis and uterus.

The protein localises to the nucleus. Its function is as follows. Putative transcriptional activator involved in the hypothalamo-pituitary-gonadal system. The protein is TOX high mobility group box family member 2 (Tox2) of Rattus norvegicus (Rat).